Reading from the N-terminus, the 195-residue chain is Imidazoleglycerol-phosphate dehydratase (195 aa).

It belongs to the imidazoleglycerol-phosphate dehydratase family.

The protein resides in the cytoplasm. It catalyses the reaction D-erythro-1-(imidazol-4-yl)glycerol 3-phosphate = 3-(imidazol-4-yl)-2-oxopropyl phosphate + H2O. The protein operates within amino-acid biosynthesis; L-histidine biosynthesis; L-histidine from 5-phospho-alpha-D-ribose 1-diphosphate: step 6/9. The sequence is that of Imidazoleglycerol-phosphate dehydratase from Dechloromonas aromatica (strain RCB).